Consider the following 573-residue polypeptide: Maestro heat-like repeat-containing protein family member 9 (573 aa).

5 HEAT repeats span residues 118-155, 252-289, 292-328, 357-394, and 418-458; these read LYKL…FTVT, PLLT…FHAE, TMVS…TSPK, SVAP…ITNL, and QYFP…LLNC.

The sequence is that of Maestro heat-like repeat-containing protein family member 9 (MROH9) from Homo sapiens (Human).